Consider the following 119-residue polypeptide: Beta-2-microglobulin (119 aa).

The N-terminal stretch at 1 to 20 (MARSVTVIFLVLVSLAVVLA) is a signal peptide. The Ig-like C1-type domain maps to 25 to 114 (PQIQVYSRHP…VTLKEPKTVT (90 aa)). Residues cysteine 45 and cysteine 100 are joined by a disulfide bond.

This sequence belongs to the beta-2-microglobulin family. As to quaternary structure, heterodimer of an alpha chain and a beta chain. Beta-2-microglobulin is the beta-chain of major histocompatibility complex class I molecules. Forms a heterotrimer with MR1 and a metabolite antigen.

It localises to the secreted. In terms of biological role, component of the class I major histocompatibility complex (MHC). Involved in the presentation of peptide antigens to the immune system. This Rattus norvegicus (Rat) protein is Beta-2-microglobulin (B2m).